A 316-amino-acid chain; its full sequence is Ribosomal RNA small subunit methyltransferase H (316 aa).

S-adenosyl-L-methionine contacts are provided by residues 35 to 37 (GGH), Asp55, Phe79, Asp101, and Gln108.

This sequence belongs to the methyltransferase superfamily. RsmH family.

The protein resides in the cytoplasm. The enzyme catalyses cytidine(1402) in 16S rRNA + S-adenosyl-L-methionine = N(4)-methylcytidine(1402) in 16S rRNA + S-adenosyl-L-homocysteine + H(+). Functionally, specifically methylates the N4 position of cytidine in position 1402 (C1402) of 16S rRNA. The sequence is that of Ribosomal RNA small subunit methyltransferase H from Aliivibrio fischeri (strain MJ11) (Vibrio fischeri).